Here is a 338-residue protein sequence, read N- to C-terminus: Tryptophan--tRNA ligase (338 aa).

Residues 11-13 and 19-20 each bind ATP; these read QPS and GN. Positions 12 to 20 match the 'HIGH' region motif; it reads PSGELSIGN. Position 135 (aspartate 135) interacts with L-tryptophan. Residues 147–149, valine 189, and 198–202 each bind ATP; these read GSD and KMSKS. Positions 198–202 match the 'KMSKS' region motif; the sequence is KMSKS.

Belongs to the class-I aminoacyl-tRNA synthetase family. As to quaternary structure, homodimer.

The protein localises to the cytoplasm. It catalyses the reaction tRNA(Trp) + L-tryptophan + ATP = L-tryptophyl-tRNA(Trp) + AMP + diphosphate + H(+). Functionally, catalyzes the attachment of tryptophan to tRNA(Trp). The polypeptide is Tryptophan--tRNA ligase (Aliivibrio fischeri (strain ATCC 700601 / ES114) (Vibrio fischeri)).